Here is a 101-residue protein sequence, read N- to C-terminus: Small ribosomal subunit protein bS18c (101 aa).

It belongs to the bacterial ribosomal protein bS18 family. As to quaternary structure, part of the 30S ribosomal subunit.

The protein resides in the plastid. The protein localises to the chloroplast. The polypeptide is Small ribosomal subunit protein bS18c (Guizotia abyssinica (Niger)).